A 185-amino-acid polypeptide reads, in one-letter code: Translocon-associated protein subunit gamma (185 aa).

Met1 carries the N-acetylmethionine modification. The Lumenal segment spans residues Met1–Lys27. Residue Ser11 is modified to Phosphoserine. The chain crosses the membrane as a helical span at residues Ser28–Trp48. The Cytoplasmic portion of the chain corresponds to Arg49–Asp54. Residues Leu55–Ala76 form a helical membrane-spanning segment. Topologically, residues Tyr77–Thr135 are lumenal. Ser105 carries the phosphoserine modification. Residues Phe136–Leu157 traverse the membrane as a helical segment. Residues Lys158 to Thr163 are Cytoplasmic-facing. The chain crosses the membrane as a helical span at residues Val164–Ser184.

It belongs to the TRAP-gamma family. As to quaternary structure, heterotetramer of TRAP-alpha, TRAP-beta, TRAP-delta and TRAP-gamma.

Its subcellular location is the endoplasmic reticulum membrane. TRAP proteins are part of a complex whose function is to bind calcium to the ER membrane and thereby regulate the retention of ER resident proteins. The polypeptide is Translocon-associated protein subunit gamma (SSR3) (Pongo abelii (Sumatran orangutan)).